The following is a 182-amino-acid chain: Troponin I, fast skeletal muscle (182 aa).

G2 bears the N-acetylglycine mark. Positions 2 to 48 are involved in binding TNC; the sequence is GDEEKRNRAITARRQHLKSVMLQIAATELEKEESRRESEKQNYLSEH. T12 is subject to Phosphothreonine. Basic and acidic residues predominate over residues 29–41; it reads ELEKEESRRESEK. The interval 29 to 53 is disordered; the sequence is ELEKEESRRESEKQNYLSEHCPPLH. The segment at 97–117 is involved in binding TNC and actin; it reads NQKLFDLRGKFKRPPLRRVRM. Residue S118 is modified to Phosphoserine.

Belongs to the troponin I family. As to quaternary structure, binds to actin and tropomyosin.

Its function is as follows. Troponin I is the inhibitory subunit of troponin, the thin filament regulatory complex which confers calcium-sensitivity to striated muscle actomyosin ATPase activity. This chain is Troponin I, fast skeletal muscle (Tnni2), found in Rattus norvegicus (Rat).